A 603-amino-acid chain; its full sequence is DNA mismatch repair protein MutL (603 aa).

The protein belongs to the DNA mismatch repair MutL/HexB family.

Functionally, this protein is involved in the repair of mismatches in DNA. It is required for dam-dependent methyl-directed DNA mismatch repair. May act as a 'molecular matchmaker', a protein that promotes the formation of a stable complex between two or more DNA-binding proteins in an ATP-dependent manner without itself being part of a final effector complex. The sequence is that of DNA mismatch repair protein MutL from Listeria monocytogenes serotype 4a (strain HCC23).